Consider the following 406-residue polypeptide: Exodeoxyribonuclease 7 large subunit (406 aa).

The protein belongs to the XseA family. In terms of assembly, heterooligomer composed of large and small subunits.

The protein localises to the cytoplasm. The enzyme catalyses Exonucleolytic cleavage in either 5'- to 3'- or 3'- to 5'-direction to yield nucleoside 5'-phosphates.. Bidirectionally degrades single-stranded DNA into large acid-insoluble oligonucleotides, which are then degraded further into small acid-soluble oligonucleotides. This is Exodeoxyribonuclease 7 large subunit from Desulfitobacterium hafniense (strain Y51).